The sequence spans 351 residues: 4-hydroxy-3-methylbut-2-enyl diphosphate reductase (351 aa).

Cysteine 18 is a [4Fe-4S] cluster binding site. The (2E)-4-hydroxy-3-methylbut-2-enyl diphosphate site is built by histidine 47 and histidine 83. The dimethylallyl diphosphate site is built by histidine 47 and histidine 83. Residues histidine 47 and histidine 83 each contribute to the isopentenyl diphosphate site. Cysteine 105 provides a ligand contact to [4Fe-4S] cluster. Residue histidine 133 participates in (2E)-4-hydroxy-3-methylbut-2-enyl diphosphate binding. Histidine 133 contributes to the dimethylallyl diphosphate binding site. An isopentenyl diphosphate-binding site is contributed by histidine 133. The Proton donor role is filled by glutamate 135. Threonine 174 provides a ligand contact to (2E)-4-hydroxy-3-methylbut-2-enyl diphosphate. Residue cysteine 204 participates in [4Fe-4S] cluster binding. 4 residues coordinate (2E)-4-hydroxy-3-methylbut-2-enyl diphosphate: serine 232, serine 233, asparagine 234, and serine 277. Dimethylallyl diphosphate contacts are provided by serine 232, serine 233, asparagine 234, and serine 277. Residues serine 232, serine 233, asparagine 234, and serine 277 each contribute to the isopentenyl diphosphate site.

The protein belongs to the IspH family. [4Fe-4S] cluster serves as cofactor.

The catalysed reaction is isopentenyl diphosphate + 2 oxidized [2Fe-2S]-[ferredoxin] + H2O = (2E)-4-hydroxy-3-methylbut-2-enyl diphosphate + 2 reduced [2Fe-2S]-[ferredoxin] + 2 H(+). It catalyses the reaction dimethylallyl diphosphate + 2 oxidized [2Fe-2S]-[ferredoxin] + H2O = (2E)-4-hydroxy-3-methylbut-2-enyl diphosphate + 2 reduced [2Fe-2S]-[ferredoxin] + 2 H(+). It participates in isoprenoid biosynthesis; dimethylallyl diphosphate biosynthesis; dimethylallyl diphosphate from (2E)-4-hydroxy-3-methylbutenyl diphosphate: step 1/1. Its pathway is isoprenoid biosynthesis; isopentenyl diphosphate biosynthesis via DXP pathway; isopentenyl diphosphate from 1-deoxy-D-xylulose 5-phosphate: step 6/6. Functionally, catalyzes the conversion of 1-hydroxy-2-methyl-2-(E)-butenyl 4-diphosphate (HMBPP) into a mixture of isopentenyl diphosphate (IPP) and dimethylallyl diphosphate (DMAPP). Acts in the terminal step of the DOXP/MEP pathway for isoprenoid precursor biosynthesis. This is 4-hydroxy-3-methylbut-2-enyl diphosphate reductase from Bartonella tribocorum (strain CIP 105476 / IBS 506).